We begin with the raw amino-acid sequence, 853 residues long: Eukaryotic translation initiation factor 3 subunit C (853 aa).

The segment at 1-78 (MSRFFAASDS…EDEDQNKVLK (78 aa)) is disordered. The span at 11-46 (SSEESSEEELYSDNEASAQEDSDKDSDDDDSDDDDS) shows a compositional bias: acidic residues. The PCI domain maps to 599 to 773 (FHMHINLELL…SAIIFRKGVE (175 aa)). A disordered region spans residues 798 to 853 (TLEQRTQGTANAFERQGGRGGRGGGRGRGGGRGGGVPRGGRNQQFTGGALGRAIQA). The span at 815–835 (GRGGRGGGRGRGGGRGGGVPR) shows a compositional bias: gly residues.

The protein belongs to the eIF-3 subunit C family. Component of the eukaryotic translation initiation factor 3 (eIF-3) complex.

The protein localises to the cytoplasm. In terms of biological role, component of the eukaryotic translation initiation factor 3 (eIF-3) complex, which is involved in protein synthesis of a specialized repertoire of mRNAs and, together with other initiation factors, stimulates binding of mRNA and methionyl-tRNAi to the 40S ribosome. The eIF-3 complex specifically targets and initiates translation of a subset of mRNAs involved in cell proliferation. The polypeptide is Eukaryotic translation initiation factor 3 subunit C (Phaeosphaeria nodorum (strain SN15 / ATCC MYA-4574 / FGSC 10173) (Glume blotch fungus)).